Consider the following 445-residue polypeptide: UPF0210 protein STER_0157 (445 aa).

It belongs to the UPF0210 family. In terms of assembly, homodimer.

The protein is UPF0210 protein STER_0157 of Streptococcus thermophilus (strain ATCC BAA-491 / LMD-9).